The following is a 248-amino-acid chain: Triosephosphate isomerase A (248 aa).

The substrate site is built by asparagine 11 and lysine 13. The active-site Electrophile is histidine 95. Catalysis depends on glutamate 165, which acts as the Proton acceptor.

Belongs to the triosephosphate isomerase family. As to quaternary structure, homodimer.

The protein resides in the cytoplasm. The catalysed reaction is dihydroxyacetone phosphate = methylglyoxal + phosphate. It catalyses the reaction D-glyceraldehyde 3-phosphate = dihydroxyacetone phosphate. The protein operates within carbohydrate degradation; glycolysis; D-glyceraldehyde 3-phosphate from glycerone phosphate: step 1/1. It functions in the pathway carbohydrate biosynthesis; gluconeogenesis. In terms of biological role, triosephosphate isomerase is an extremely efficient metabolic enzyme that catalyzes the interconversion between dihydroxyacetone phosphate (DHAP) and D-glyceraldehyde-3-phosphate (G3P) in glycolysis and gluconeogenesis. It is also responsible for the non-negligible production of methylglyoxal a reactive cytotoxic side-product that modifies and can alter proteins, DNA and lipids. This Danio rerio (Zebrafish) protein is Triosephosphate isomerase A (tpi1a).